A 325-amino-acid chain; its full sequence is Elongation factor P--(R)-beta-lysine ligase (325 aa).

76 to 78 (SPE) provides a ligand contact to substrate. ATP-binding positions include 100–102 (RNE) and N109. Y118 contacts substrate. ATP is bound at residue 244-245 (EL). E251 serves as a coordination point for substrate. G300 is an ATP binding site.

This sequence belongs to the class-II aminoacyl-tRNA synthetase family. EpmA subfamily. In terms of assembly, homodimer.

The catalysed reaction is D-beta-lysine + L-lysyl-[protein] + ATP = N(6)-((3R)-3,6-diaminohexanoyl)-L-lysyl-[protein] + AMP + diphosphate + H(+). Functionally, with EpmB is involved in the beta-lysylation step of the post-translational modification of translation elongation factor P (EF-P). Catalyzes the ATP-dependent activation of (R)-beta-lysine produced by EpmB, forming a lysyl-adenylate, from which the beta-lysyl moiety is then transferred to the epsilon-amino group of a conserved specific lysine residue in EF-P. The sequence is that of Elongation factor P--(R)-beta-lysine ligase from Edwardsiella ictaluri (strain 93-146).